Reading from the N-terminus, the 240-residue chain is 1-acyl-sn-glycerol-3-phosphate acyltransferase (240 aa).

The HXXXXD motif motif lies at 73–78; the sequence is HQNNYD.

Belongs to the 1-acyl-sn-glycerol-3-phosphate acyltransferase family.

It localises to the cell inner membrane. It catalyses the reaction a 1-acyl-sn-glycero-3-phosphate + an acyl-CoA = a 1,2-diacyl-sn-glycero-3-phosphate + CoA. Its pathway is phospholipid metabolism; CDP-diacylglycerol biosynthesis; CDP-diacylglycerol from sn-glycerol 3-phosphate: step 2/3. In terms of biological role, converts lysophosphatidic acid (LPA) into phosphatidic acid by incorporating acyl moiety at the 2 position. The polypeptide is 1-acyl-sn-glycerol-3-phosphate acyltransferase (plsC) (Haemophilus influenzae (strain ATCC 51907 / DSM 11121 / KW20 / Rd)).